The sequence spans 193 residues: Large ribosomal subunit protein eL19A (193 aa).

Positions Q156–E179 are disordered. A compositionally biased stretch (basic residues) spans A164–A174.

This sequence belongs to the eukaryotic ribosomal protein eL19 family. In terms of assembly, component of the large ribosomal subunit (LSU). Mature yeast ribosomes consist of a small (40S) and a large (60S) subunit. The 40S small subunit contains 1 molecule of ribosomal RNA (18S rRNA) and at least 33 different proteins. The large 60S subunit contains 3 rRNA molecules (25S, 5.8S and 5S rRNA) and at least 46 different proteins. eL19 lies in close proximity to the binding site for eukaryotic initiation factor eIF4G.

Its subcellular location is the cytoplasm. Its function is as follows. Component of the ribosome, a large ribonucleoprotein complex responsible for the synthesis of proteins in the cell. The small ribosomal subunit (SSU) binds messenger RNAs (mRNAs) and translates the encoded message by selecting cognate aminoacyl-transfer RNA (tRNA) molecules. The large subunit (LSU) contains the ribosomal catalytic site termed the peptidyl transferase center (PTC), which catalyzes the formation of peptide bonds, thereby polymerizing the amino acids delivered by tRNAs into a polypeptide chain. The nascent polypeptides leave the ribosome through a tunnel in the LSU and interact with protein factors that function in enzymatic processing, targeting, and the membrane insertion of nascent chains at the exit of the ribosomal tunnel. eL19 may play a role in the last stages of translation initiation, in particular subunit joining and shedding/releasing factors. This Schizosaccharomyces pombe (strain 972 / ATCC 24843) (Fission yeast) protein is Large ribosomal subunit protein eL19A (rpl1901).